The following is a 435-amino-acid chain: Methylenetetrahydrofolate--tRNA-(uracil-5-)-methyltransferase TrmFO (435 aa).

7 to 12 (GAGLAG) provides a ligand contact to FAD.

The protein belongs to the MnmG family. TrmFO subfamily. Requires FAD as cofactor.

The protein resides in the cytoplasm. The catalysed reaction is uridine(54) in tRNA + (6R)-5,10-methylene-5,6,7,8-tetrahydrofolate + NADH + H(+) = 5-methyluridine(54) in tRNA + (6S)-5,6,7,8-tetrahydrofolate + NAD(+). It catalyses the reaction uridine(54) in tRNA + (6R)-5,10-methylene-5,6,7,8-tetrahydrofolate + NADPH + H(+) = 5-methyluridine(54) in tRNA + (6S)-5,6,7,8-tetrahydrofolate + NADP(+). Catalyzes the folate-dependent formation of 5-methyl-uridine at position 54 (M-5-U54) in all tRNAs. The protein is Methylenetetrahydrofolate--tRNA-(uracil-5-)-methyltransferase TrmFO of Thermotoga maritima (strain ATCC 43589 / DSM 3109 / JCM 10099 / NBRC 100826 / MSB8).